A 343-amino-acid chain; its full sequence is L-lysine cyclodeaminase (343 aa).

The protein belongs to the ornithine cyclodeaminase/mu-crystallin family. The cofactor is NAD(+).

It catalyses the reaction L-lysine = L-pipecolate + NH4(+). It participates in antibiotic biosynthesis. Its activity is regulated as follows. Inhibited by nipecotic acid and thiazolidine-2-carboxylic acid. In terms of biological role, converts L-lysine to L-pipecolate, which is incorporated into multiple secondary metabolite products, including rapamycin, tobulysin, virginiamycin and pristinamycin. The polypeptide is L-lysine cyclodeaminase (rapL) (Streptomyces rapamycinicus (strain ATCC 29253 / DSM 41530 / NRRL 5491 / AYB-994) (Streptomyces hygroscopicus (strain ATCC 29253))).